A 391-amino-acid chain; its full sequence is Serine acetyltransferase 3, mitochondrial (391 aa).

Disordered stretches follow at residues 40–82 (KHHT…HDDE) and 353–375 (VGNP…IPGL). Pro residues predominate over residues 45-56 (SPPPSPPPPPPM).

It belongs to the transferase hexapeptide repeat family. As to quaternary structure, homomultimer. Interacts with OASC. Component of the cysteine synthase complex (CSC) composed of two OAS-TL dimers and one SAT hexamer. Ubiquitous with higher levels in leaves and siliques. Localized in vascular tissues, particularly in phloem.

Its subcellular location is the mitochondrion. It catalyses the reaction L-serine + acetyl-CoA = O-acetyl-L-serine + CoA. It functions in the pathway amino-acid biosynthesis; L-cysteine biosynthesis; L-cysteine from L-serine: step 1/2. The sequence is that of Serine acetyltransferase 3, mitochondrial (SAT3) from Arabidopsis thaliana (Mouse-ear cress).